Reading from the N-terminus, the 252-residue chain is Phosphate import ATP-binding protein PstB 1 (252 aa).

One can recognise an ABC transporter domain in the interval 6–247; that stretch reads LQVSDLSVYY…PQHKETEDYI (242 aa). Residue 38–45 participates in ATP binding; it reads GPSGSGKS.

Belongs to the ABC transporter superfamily. Phosphate importer (TC 3.A.1.7) family. As to quaternary structure, the complex is composed of two ATP-binding proteins (PstB), two transmembrane proteins (PstC and PstA) and a solute-binding protein (PstS).

It localises to the cell membrane. The catalysed reaction is phosphate(out) + ATP + H2O = ADP + 2 phosphate(in) + H(+). Part of the ABC transporter complex PstSACB involved in phosphate import. Responsible for energy coupling to the transport system. This is Phosphate import ATP-binding protein PstB 1 from Streptococcus pneumoniae (strain ATCC BAA-255 / R6).